Here is a 210-residue protein sequence, read N- to C-terminus: Pyridoxine/pyridoxamine 5'-phosphate oxidase (210 aa).

Substrate is bound by residues 7–10 and Lys65; that span reads RQSY. Residues 60-65, 75-76, Arg81, Lys82, and Gln104 contribute to the FMN site; these read RIVLIK and YT. Positions 122, 126, and 130 each coordinate substrate. FMN contacts are provided by residues 139–140 and Trp182; that span reads QS. Position 188 to 190 (188 to 190) interacts with substrate; it reads RLH. An FMN-binding site is contributed by Arg192.

This sequence belongs to the pyridoxamine 5'-phosphate oxidase family. As to quaternary structure, homodimer. The cofactor is FMN.

The catalysed reaction is pyridoxamine 5'-phosphate + O2 + H2O = pyridoxal 5'-phosphate + H2O2 + NH4(+). It carries out the reaction pyridoxine 5'-phosphate + O2 = pyridoxal 5'-phosphate + H2O2. It participates in cofactor metabolism; pyridoxal 5'-phosphate salvage; pyridoxal 5'-phosphate from pyridoxamine 5'-phosphate: step 1/1. Its pathway is cofactor metabolism; pyridoxal 5'-phosphate salvage; pyridoxal 5'-phosphate from pyridoxine 5'-phosphate: step 1/1. Catalyzes the oxidation of either pyridoxine 5'-phosphate (PNP) or pyridoxamine 5'-phosphate (PMP) into pyridoxal 5'-phosphate (PLP). In Bordetella petrii (strain ATCC BAA-461 / DSM 12804 / CCUG 43448), this protein is Pyridoxine/pyridoxamine 5'-phosphate oxidase.